We begin with the raw amino-acid sequence, 380 residues long: Cytochrome b (380 aa).

4 helical membrane-spanning segments follow: residues phenylalanine 33–methionine 53, tryptophan 77–isoleucine 98, tryptophan 113–leucine 133, and phenylalanine 178–leucine 198. Positions 83 and 97 each coordinate heme b. Positions 182 and 196 each coordinate heme b. Histidine 201 is a binding site for a ubiquinone. A run of 4 helical transmembrane segments spans residues tyrosine 226–asparagine 246, leucine 288–histidine 308, serine 320–glycine 340, and phenylalanine 347–proline 367.

This sequence belongs to the cytochrome b family. In terms of assembly, the cytochrome bc1 complex contains 3 respiratory subunits (MT-CYB, CYC1 and UQCRFS1), 2 core proteins (UQCRC1 and UQCRC2) and probably 6 low-molecular weight proteins. Heme b serves as cofactor.

The protein resides in the mitochondrion inner membrane. Its function is as follows. Component of the ubiquinol-cytochrome c reductase complex (complex III or cytochrome b-c1 complex) that is part of the mitochondrial respiratory chain. The b-c1 complex mediates electron transfer from ubiquinol to cytochrome c. Contributes to the generation of a proton gradient across the mitochondrial membrane that is then used for ATP synthesis. This Lepisosteus oculatus (Spotted gar) protein is Cytochrome b (mt-cyb).